We begin with the raw amino-acid sequence, 298 residues long: uncharacterized protein (298 aa).

The next 10 helical transmembrane spans lie at 5 to 23 (ILVSLLASFLFGYMYYFST), 33 to 52 (IFGYRMIFTFPFVLLSVTLF), 72 to 91 (ALSYLLCGLLMGFQMWLFLW), 101 to 120 (VSFGYLLLPIVMVAAGRVFF), 127 to 145 (FKFIAVIIATLGVISNIVL), 149 to 166 (LSWEAIVICLGYTAYFSI), 175 to 194 (LASFCLEMLSLMPVSIYFAL), 207 to 229 (FIWGXLVLLGLISGTALIAYVIA), 238 to 260 (LGLLGYVETIMMLCVSFLIGEQI), and 265 to 284 (YPLFICLVIAMILVMVDGVY). The 132-residue stretch at 13–144 (FLFGYMYYFS…ATLGVISNIV (132 aa)) folds into the EamA domain.

Belongs to the EamA transporter family.

Its subcellular location is the cell membrane. This is an uncharacterized protein from Haemophilus influenzae (strain ATCC 51907 / DSM 11121 / KW20 / Rd).